The chain runs to 99 residues: Aspartyl/glutamyl-tRNA(Asn/Gln) amidotransferase subunit C (99 aa).

Belongs to the GatC family. In terms of assembly, heterotrimer of A, B and C subunits.

It carries out the reaction L-glutamyl-tRNA(Gln) + L-glutamine + ATP + H2O = L-glutaminyl-tRNA(Gln) + L-glutamate + ADP + phosphate + H(+). The catalysed reaction is L-aspartyl-tRNA(Asn) + L-glutamine + ATP + H2O = L-asparaginyl-tRNA(Asn) + L-glutamate + ADP + phosphate + 2 H(+). Its function is as follows. Allows the formation of correctly charged Asn-tRNA(Asn) or Gln-tRNA(Gln) through the transamidation of misacylated Asp-tRNA(Asn) or Glu-tRNA(Gln) in organisms which lack either or both of asparaginyl-tRNA or glutaminyl-tRNA synthetases. The reaction takes place in the presence of glutamine and ATP through an activated phospho-Asp-tRNA(Asn) or phospho-Glu-tRNA(Gln). The protein is Aspartyl/glutamyl-tRNA(Asn/Gln) amidotransferase subunit C of Paraburkholderia xenovorans (strain LB400).